The sequence spans 123 residues: Large ribosomal subunit protein bL17 (123 aa).

This sequence belongs to the bacterial ribosomal protein bL17 family. In terms of assembly, part of the 50S ribosomal subunit. Contacts protein L32.

This chain is Large ribosomal subunit protein bL17, found in Borrelia garinii subsp. bavariensis (strain ATCC BAA-2496 / DSM 23469 / PBi) (Borreliella bavariensis).